We begin with the raw amino-acid sequence, 96 residues long: Protein Vpr (96 aa).

The interval 1-42 (MEQAPEDQGPQREPHNEWTLELLEEIKNEAVRHFPRVWLHQL) is homooligomerization. Phosphoserine; by host occurs at positions 79, 94, and 96.

It belongs to the HIV-1 VPR protein family. In terms of assembly, homooligomer, may form homodimer. Interacts with p6-gag region of the Pr55 Gag precursor protein through a (Leu-X-X)4 motif near the C-terminus of the P6gag protein. Interacts with host UNG. May interact with host RAD23A/HHR23A. Interacts with host VPRBP/DCAF1, leading to hijack the CUL4A-RBX1-DDB1-DCAF1/VPRBP complex, mediating ubiquitination of host proteins such as TERT and ZGPAT and arrest of the cell cycle in G2 phase. Post-translationally, phosphorylated on several residues by host. These phosphorylations regulate VPR activity for the nuclear import of the HIV-1 pre-integration complex.

Its subcellular location is the virion. The protein localises to the host nucleus. It is found in the host extracellular space. During virus replication, may deplete host UNG protein, and incude G2-M cell cycle arrest. Acts by targeting specific host proteins for degradation by the 26S proteasome, through association with the cellular CUL4A-DDB1 E3 ligase complex by direct interaction with host VPRPB/DCAF-1. Cell cycle arrest reportedly occurs within hours of infection and is not blocked by antiviral agents, suggesting that it is initiated by the VPR carried into the virion. Additionally, VPR induces apoptosis in a cell cycle dependent manner suggesting that these two effects are mechanistically linked. Detected in the serum and cerebrospinal fluid of AIDS patient, VPR may also induce cell death to bystander cells. Its function is as follows. During virus entry, plays a role in the transport of the viral pre-integration (PIC) complex to the host nucleus. This function is crucial for viral infection of non-dividing macrophages. May act directly at the nuclear pore complex, by binding nucleoporins phenylalanine-glycine (FG)-repeat regions. The protein is Protein Vpr of Homo sapiens (Human).